A 216-amino-acid chain; its full sequence is Holliday junction branch migration complex subunit RuvA (216 aa).

The domain I stretch occupies residues 1–64 (MISFIKGVLI…EDAQQLYGFK (64 aa)). Residues 65 to 143 (SKVDKKVFQE…KMANEIYAQT (79 aa)) form a domain II region. A flexible linker region spans residues 144-163 (SGTTTTSQDSQAQQAPTSVV). The interval 164 to 216 (LANSIFNESVDALLALGYKQKDAEKMARSAMGDATTAAEVIRKALQGSIKSKR) is domain III.

It belongs to the RuvA family. As to quaternary structure, homotetramer. Forms an RuvA(8)-RuvB(12)-Holliday junction (HJ) complex. HJ DNA is sandwiched between 2 RuvA tetramers; dsDNA enters through RuvA and exits via RuvB. An RuvB hexamer assembles on each DNA strand where it exits the tetramer. Each RuvB hexamer is contacted by two RuvA subunits (via domain III) on 2 adjacent RuvB subunits; this complex drives branch migration. In the full resolvosome a probable DNA-RuvA(4)-RuvB(12)-RuvC(2) complex forms which resolves the HJ.

It localises to the cytoplasm. The RuvA-RuvB-RuvC complex processes Holliday junction (HJ) DNA during genetic recombination and DNA repair, while the RuvA-RuvB complex plays an important role in the rescue of blocked DNA replication forks via replication fork reversal (RFR). RuvA specifically binds to HJ cruciform DNA, conferring on it an open structure. The RuvB hexamer acts as an ATP-dependent pump, pulling dsDNA into and through the RuvAB complex. HJ branch migration allows RuvC to scan DNA until it finds its consensus sequence, where it cleaves and resolves the cruciform DNA. The chain is Holliday junction branch migration complex subunit RuvA from Francisella tularensis subsp. mediasiatica (strain FSC147).